The primary structure comprises 361 residues: UDP-D-xylose:L-fucose alpha-1,3-D-xylosyltransferase 1 (361 aa).

The interval 1–21 (MEQKQHILKQSTFSSSPSSYS) is disordered. The Cytoplasmic portion of the chain corresponds to 1-34 (MEQKQHILKQSTFSSSPSSYSSISDRPISLLSRN). The segment covering 11-21 (STFSSSPSSYS) has biased composition (low complexity). The chain crosses the membrane as a helical; Signal-anchor for type II membrane protein span at residues 35–55 (GLLLLLLALVLLLGVLLPWPG). Over 56–361 (SPLFLFPNRL…ALESPLGKLE (306 aa)) the chain is Lumenal. N-linked (GlcNAc...) asparagine glycosylation is found at Asn-92 and Asn-167. The short motif at 190-192 (DVD) is the DXD motif element. N-linked (GlcNAc...) asparagine glycans are attached at residues Asn-222 and Asn-286.

It belongs to the glycosyltransferase 77 family. Requires Mn(2+) as cofactor. The cofactor is Mg(2+). Glycosylated. As to expression, expressed in roots, rosette leaves, cauline leaves and stems.

It localises to the golgi apparatus membrane. Catalyzes the transfer of D-xylose from UDP-alpha-D-xylose onto L-fucose. Probably involved in the biosynthesis of rhamnogalacturonan II (RG-II) through xylosylation of the internal fucose moiety of the A-chain of RG-II, a structurally complex pectic polysaccharide of the primary cell wall. RG-II is essential for the cell wall integrity of rapidly growing tissues such as roots and pollen tube growth and elongation. The sequence is that of UDP-D-xylose:L-fucose alpha-1,3-D-xylosyltransferase 1 from Arabidopsis thaliana (Mouse-ear cress).